Reading from the N-terminus, the 228-residue chain is ATP phosphoribosyltransferase (228 aa).

It belongs to the ATP phosphoribosyltransferase family. Short subfamily. As to quaternary structure, heteromultimer composed of HisG and HisZ subunits.

Its subcellular location is the cytoplasm. The enzyme catalyses 1-(5-phospho-beta-D-ribosyl)-ATP + diphosphate = 5-phospho-alpha-D-ribose 1-diphosphate + ATP. It functions in the pathway amino-acid biosynthesis; L-histidine biosynthesis; L-histidine from 5-phospho-alpha-D-ribose 1-diphosphate: step 1/9. Functionally, catalyzes the condensation of ATP and 5-phosphoribose 1-diphosphate to form N'-(5'-phosphoribosyl)-ATP (PR-ATP). Has a crucial role in the pathway because the rate of histidine biosynthesis seems to be controlled primarily by regulation of HisG enzymatic activity. This is ATP phosphoribosyltransferase from Acinetobacter baylyi (strain ATCC 33305 / BD413 / ADP1).